Consider the following 267-residue polypeptide: NAD kinase 2 (267 aa).

The Proton acceptor role is filled by D52. Residues 52-53 (DA), 124-125 (NE), R151, D153, 164-169 (TAYNKS), and A188 each bind NAD(+).

It belongs to the NAD kinase family. It depends on a divalent metal cation as a cofactor.

It is found in the cytoplasm. The catalysed reaction is NAD(+) + ATP = ADP + NADP(+) + H(+). Its function is as follows. Involved in the regulation of the intracellular balance of NAD and NADP, and is a key enzyme in the biosynthesis of NADP. Catalyzes specifically the phosphorylation on 2'-hydroxyl of the adenosine moiety of NAD to yield NADP. The sequence is that of NAD kinase 2 from Bacillus cereus (strain ATCC 10987 / NRS 248).